A 55-amino-acid chain; its full sequence is Large ribosomal subunit protein bL33 (55 aa).

Residues 1 to 11 are compositionally biased toward basic and acidic residues; it reads MAKGGREKIKL. The disordered stretch occupies residues 1 to 27; it reads MAKGGREKIKLESTAGTGHFYTTSKNK. Polar residues predominate over residues 14 to 24; the sequence is TAGTGHFYTTS.

The protein belongs to the bacterial ribosomal protein bL33 family.

The protein is Large ribosomal subunit protein bL33 of Dechloromonas aromatica (strain RCB).